Here is a 519-residue protein sequence, read N- to C-terminus: Ubiquitin carboxyl-terminal hydrolase 30 (519 aa).

Topologically, residues 1-52 (MSWAPVSTWSRRTPLAACCSAPELPPAGAWKACAAGSLRIGPQGRCKMMKNW) are mitochondrial intermembrane. A helical membrane pass occupies residues 53–73 (GMIGGIAAALAAGIYVLWGPI). The Cytoplasmic segment spans residues 74 to 519 (SDRKKYRKGL…HPEDQRAAEK (446 aa)). The USP domain maps to 85-504 (PGLLNLGNTC…SAYLLFYERI (420 aa)). The active-site Nucleophile is the Cys-94. A disordered region spans residues 379–405 (SKQPANHLSAAEQETTDGKEGGAQNPT). The active-site Proton acceptor is the His-455.

This sequence belongs to the peptidase C19 family.

Its subcellular location is the mitochondrion outer membrane. The catalysed reaction is Thiol-dependent hydrolysis of ester, thioester, amide, peptide and isopeptide bonds formed by the C-terminal Gly of ubiquitin (a 76-residue protein attached to proteins as an intracellular targeting signal).. Deubiquitinating enzyme that acts as a key inhibitor of mitophagy by counteracting the action of parkin (PRKN). This is Ubiquitin carboxyl-terminal hydrolase 30 (usp30) from Xenopus tropicalis (Western clawed frog).